The chain runs to 37 residues: Lambda-hexatoxin-Hf1a (37 aa).

Cystine bridges form between cysteine 4–cysteine 18, cysteine 11–cysteine 23, cysteine 14–cysteine 15, and cysteine 17–cysteine 34.

This sequence belongs to the neurotoxin 11 (kappa toxin) family. In terms of tissue distribution, expressed by the venom gland.

It localises to the secreted. In terms of biological role, this excitatory toxin inhibits insect calcium-activated potassium (KCa) channels (Slo-type). This Hadronyche formidabilis (Northern tree funnel-web spider) protein is Lambda-hexatoxin-Hf1a.